The following is a 203-amino-acid chain: Serine hydrolase-like protein (203 aa).

The AB hydrolase-1 domain occupies 33–145 (PPVLCLHGWL…FLLESDEMEN (113 aa)). Residue S108 is part of the active site.

The protein belongs to the AB hydrolase superfamily.

In terms of biological role, putative serine hydrolase. The polypeptide is Serine hydrolase-like protein (SERHL) (Homo sapiens (Human)).